A 205-amino-acid polypeptide reads, in one-letter code: Thymidylate kinase (205 aa).

10-17 (GLEGAGKS) contributes to the ATP binding site.

It belongs to the thymidylate kinase family.

The catalysed reaction is dTMP + ATP = dTDP + ADP. Its function is as follows. Phosphorylation of dTMP to form dTDP in both de novo and salvage pathways of dTTP synthesis. The chain is Thymidylate kinase from Idiomarina loihiensis (strain ATCC BAA-735 / DSM 15497 / L2-TR).